Reading from the N-terminus, the 354-residue chain is tRNA-specific 2-thiouridylase MnmA (354 aa).

ATP-binding positions include Leu6–Ser13 and Leu33. Cys100 serves as the catalytic Nucleophile. A disulfide bridge links Cys100 with Cys195. Gly123 serves as a coordination point for ATP. The interval Lys145 to Gln147 is interaction with tRNA. Cys195 (cysteine persulfide intermediate) is an active-site residue.

It belongs to the MnmA/TRMU family.

The protein resides in the cytoplasm. It catalyses the reaction S-sulfanyl-L-cysteinyl-[protein] + uridine(34) in tRNA + AH2 + ATP = 2-thiouridine(34) in tRNA + L-cysteinyl-[protein] + A + AMP + diphosphate + H(+). Catalyzes the 2-thiolation of uridine at the wobble position (U34) of tRNA, leading to the formation of s(2)U34. The polypeptide is tRNA-specific 2-thiouridylase MnmA (Borrelia hermsii (strain HS1 / DAH)).